The following is a 262-amino-acid chain: Protein crossbronx-like (262 aa).

The UBC core domain occupies 15 to 179 (RQGYQVLAEY…VQELALFTKK (165 aa)).

It belongs to the ubiquitin-conjugating enzyme family. FTS subfamily.

The sequence is that of Protein crossbronx-like from Drosophila pseudoobscura pseudoobscura (Fruit fly).